Consider the following 173-residue polypeptide: Small ribosomal subunit protein uS9 (173 aa).

Residues 1 to 15 (MTDTPTENLENTEVT) are compositionally biased toward polar residues. Disordered regions lie at residues 1 to 26 (MTDT…EIAY) and 135 to 173 (EASR…YSKR). Residues 154–173 (KERKKAGLKKARKAPQYSKR) show a composition bias toward basic residues.

This sequence belongs to the universal ribosomal protein uS9 family.

The protein is Small ribosomal subunit protein uS9 of Cutibacterium acnes (strain DSM 16379 / KPA171202) (Propionibacterium acnes).